A 140-amino-acid polypeptide reads, in one-letter code: Zinc finger SWIM domain-containing protein 7 (140 aa).

The SWIM-type zinc-finger motif lies at Y76–A114.

Belongs to the SWS1 family.

It localises to the nucleus. Functionally, involved in early stages of the homologous recombination repair (HRR) pathway of double-stranded DNA breaks arising during DNA replication or induced by DNA-damaging agents. The polypeptide is Zinc finger SWIM domain-containing protein 7 (zswim7) (Danio rerio (Zebrafish)).